A 200-amino-acid polypeptide reads, in one-letter code: Large ribosomal subunit protein uL29 (200 aa).

The large ribosomal subunit protein uL29 stretch occupies residues methionine 1 to lysine 107. A disordered region spans residues serine 92–glutamine 200. The span at threonine 93–lysine 179 shows a compositional bias: basic and acidic residues. Residues proline 108–glutamine 200 are unknown. Over residues lysine 186–glutamine 200 the composition is skewed to basic residues.

This sequence belongs to the universal ribosomal protein uL29 family.

This Mycoplasma genitalium (strain ATCC 33530 / DSM 19775 / NCTC 10195 / G37) (Mycoplasmoides genitalium) protein is Large ribosomal subunit protein uL29.